The chain runs to 558 residues: Pentatricopeptide repeat-containing protein At1g06140, mitochondrial (558 aa).

A mitochondrion-targeting transit peptide spans 1-79; the sequence is MLPVNRARAL…RNRHSWNTIL (79 aa). PPR repeat units lie at residues 38-68, 71-103, 108-142, 143-173, 174-208, 209-243, 245-275, 276-310, 311-345, 346-376, 377-411, 412-447, and 448-482; these read EVVL…IPCW, NRHS…MRRH, DSFN…GLDK, DDYV…IPVR, NSVL…GLAL, DALT…SFID, SDYL…SVDR, NVVM…SILP, NQCT…GIEM, DAVN…MPER, NVIS…NVVP, NSVT…GVVP, and EEEH…PMAS. Residues 483-558 are type E motif; sequence AWGALLSACR…HVGQSATEVG (76 aa).

This sequence belongs to the PPR family. PCMP-E subfamily.

The protein localises to the mitochondrion. This Arabidopsis thaliana (Mouse-ear cress) protein is Pentatricopeptide repeat-containing protein At1g06140, mitochondrial (PCMP-E61).